A 333-amino-acid chain; its full sequence is Homeobox protein HMX1 (333 aa).

3 disordered regions span residues 1 to 74 (MAQD…STSA), 86 to 109 (GTEG…APRC), and 139 to 204 (CASP…KKKT). Residues 17-30 (DYTQGNTDRSTAAA) show a composition bias toward polar residues. Positions 87–105 (TEGGGGTRRAAAGGGGGRG) are enriched in gly residues. Positions 144–158 (TSDRDSPELPEDTER) are enriched in basic and acidic residues. The segment covering 159 to 176 (AGGGGRAAARGPAGGRQS) has biased composition (gly residues). The span at 181 to 192 (EEEEERGEEAGE) shows a compositional bias: acidic residues. A DNA-binding region (homeobox) is located at residues 201–260 (KKKTRTVFSRSQVFQLESTFDVKRYLSSSERAGLAASLHLTETQVKIWFQNRRNKWKRQL). An HMX family specific domain 1 motif is present at residues 261–271 (AADLEAANLSH).

This sequence belongs to the HMX homeobox family.

It is found in the nucleus. DNA-binding protein that binds to the 5'-CAAG-3' core sequence. May function as a transcriptional repressor. Seems to act as a transcriptional antagonist of NKX2-5. May play an important role in the development of craniofacial structures such as the eye and ear. This chain is Homeobox protein HMX1 (HMX1), found in Gallus gallus (Chicken).